Here is a 355-residue protein sequence, read N- to C-terminus: Histidinol-phosphate aminotransferase (355 aa).

An N6-(pyridoxal phosphate)lysine modification is found at lysine 211.

This sequence belongs to the class-II pyridoxal-phosphate-dependent aminotransferase family. Histidinol-phosphate aminotransferase subfamily. In terms of assembly, homodimer. Pyridoxal 5'-phosphate serves as cofactor.

It catalyses the reaction L-histidinol phosphate + 2-oxoglutarate = 3-(imidazol-4-yl)-2-oxopropyl phosphate + L-glutamate. Its pathway is amino-acid biosynthesis; L-histidine biosynthesis; L-histidine from 5-phospho-alpha-D-ribose 1-diphosphate: step 7/9. This is Histidinol-phosphate aminotransferase from Aeromonas salmonicida (strain A449).